We begin with the raw amino-acid sequence, 486 residues long: Protein nucleotidyltransferase YdiU (486 aa).

ATP contacts are provided by glycine 90, glycine 92, arginine 93, lysine 113, aspartate 125, glycine 126, arginine 176, and arginine 183. Aspartate 252 serves as the catalytic Proton acceptor. Mg(2+) contacts are provided by asparagine 253 and aspartate 262. Aspartate 262 contributes to the ATP binding site.

Belongs to the SELO family. Mg(2+) serves as cofactor. It depends on Mn(2+) as a cofactor.

The enzyme catalyses L-seryl-[protein] + ATP = 3-O-(5'-adenylyl)-L-seryl-[protein] + diphosphate. It catalyses the reaction L-threonyl-[protein] + ATP = 3-O-(5'-adenylyl)-L-threonyl-[protein] + diphosphate. The catalysed reaction is L-tyrosyl-[protein] + ATP = O-(5'-adenylyl)-L-tyrosyl-[protein] + diphosphate. It carries out the reaction L-histidyl-[protein] + UTP = N(tele)-(5'-uridylyl)-L-histidyl-[protein] + diphosphate. The enzyme catalyses L-seryl-[protein] + UTP = O-(5'-uridylyl)-L-seryl-[protein] + diphosphate. It catalyses the reaction L-tyrosyl-[protein] + UTP = O-(5'-uridylyl)-L-tyrosyl-[protein] + diphosphate. Nucleotidyltransferase involved in the post-translational modification of proteins. It can catalyze the addition of adenosine monophosphate (AMP) or uridine monophosphate (UMP) to a protein, resulting in modifications known as AMPylation and UMPylation. This Pseudomonas entomophila (strain L48) protein is Protein nucleotidyltransferase YdiU.